We begin with the raw amino-acid sequence, 273 residues long: Dermonecrotic toxin LhSicTox-alphaIA2bvi (273 aa).

H5 is an active-site residue. Residues E25 and D27 each contribute to the Mg(2+) site. H41 acts as the Nucleophile in catalysis. 2 cysteine pairs are disulfide-bonded: C45-C51 and C47-C190. D85 lines the Mg(2+) pocket.

The protein belongs to the arthropod phospholipase D family. Class II subfamily. Mg(2+) is required as a cofactor. In terms of tissue distribution, expressed by the venom gland.

The protein localises to the secreted. The enzyme catalyses an N-(acyl)-sphingosylphosphocholine = an N-(acyl)-sphingosyl-1,3-cyclic phosphate + choline. It carries out the reaction an N-(acyl)-sphingosylphosphoethanolamine = an N-(acyl)-sphingosyl-1,3-cyclic phosphate + ethanolamine. It catalyses the reaction a 1-acyl-sn-glycero-3-phosphocholine = a 1-acyl-sn-glycero-2,3-cyclic phosphate + choline. The catalysed reaction is a 1-acyl-sn-glycero-3-phosphoethanolamine = a 1-acyl-sn-glycero-2,3-cyclic phosphate + ethanolamine. Its function is as follows. Dermonecrotic toxins cleave the phosphodiester linkage between the phosphate and headgroup of certain phospholipids (sphingolipid and lysolipid substrates), forming an alcohol (often choline) and a cyclic phosphate. This toxin acts on sphingomyelin (SM). It may also act on ceramide phosphoethanolamine (CPE), lysophosphatidylcholine (LPC) and lysophosphatidylethanolamine (LPE), but not on lysophosphatidylserine (LPS), and lysophosphatidylglycerol (LPG). It acts by transphosphatidylation, releasing exclusively cyclic phosphate products as second products. Induces dermonecrosis, hemolysis, increased vascular permeability, edema, inflammatory response, and platelet aggregation. This is Dermonecrotic toxin LhSicTox-alphaIA2bvi from Loxosceles hirsuta (Recluse spider).